A 985-amino-acid chain; its full sequence is Na(+)/H(+) antiporter (985 aa).

The Cytoplasmic portion of the chain corresponds to 1 to 12 (MAIWEQLEVSKA). Residues 13–33 (HVAYACVGVFSSIFSLVSLYV) traverse the membrane as a helical segment. Residues 34-36 (KEK) are Extracellular-facing. A helical membrane pass occupies residues 37 to 57 (LYIGESTVAGIFGLIVGPVCL). Residues 58–70 (NWFNPLKWGNSDS) lie on the Cytoplasmic side of the membrane. Residues 71–91 (ITLEITRIVLCLQIFAVAVEL) traverse the membrane as a helical segment. At 92–105 (PRKYMLKHWVSVTM) the chain is on the extracellular side. Residues 106-126 (LLLPVMTAGWLIIGLFVWILI) form a helical membrane-spanning segment. The Cytoplasmic portion of the chain corresponds to 127–128 (PG). Residues 129-149 (LNFSASLLISACITATDPILA) form a helical membrane-spanning segment. Over 150-176 (QSVVSGKFAQRVPGHLRNLLSAESGCN) the chain is Extracellular. The chain crosses the membrane as a helical span at residues 177 to 197 (DGMAFPFLFLSMNLILHPGNG). Over 198-203 (REIVKD) the chain is Cytoplasmic. A helical membrane pass occupies residues 204 to 224 (WICVTILYECLFGCLLGCFIG). Over 225 to 244 (YVGRITIRFAEKKNIIDRES) the chain is Extracellular. Residues 245–265 (FLAFYVVLAFMCAGFGSILGV) traverse the membrane as a helical segment. Residues 266–294 (DDLLVSFAAGATFAWDGWFSQKTQESNVS) lie on the Cytoplasmic side of the membrane. Residues 295 to 315 (TVIDLLLNYAYFIYFGAIIPW) form a helical membrane-spanning segment. At 316–319 (SQFN) the chain is on the extracellular side. The helical transmembrane segment at 320–340 (NGEIGTNVWRLIILSIVVIFL) threads the bilayer. Over 341 to 361 (RRIPAVMILRPLIPDIKSWRE) the chain is Cytoplasmic. A helical membrane pass occupies residues 362-382 (ALFVGHFGPIGVGAIFAAILA). The Extracellular segment spans residues 383–410 (RGELESTFSDEPTPLNVVPSKEESKHWQ). Residues 411-431 (LIACIWPITCFFIVTSIIVHG) traverse the membrane as a helical segment. Residues 432–985 (SSVAIITLGR…ALSKTLGLNK (554 aa)) lie on the Cytoplasmic side of the membrane. 2 disordered regions span residues 489 to 701 (MTLS…KPGT) and 726 to 760 (DRNE…GGRL). Polar residues predominate over residues 517–526 (NNDQIGSVAT). The segment covering 538 to 558 (PRRRKLSRKEKRLNRRQKLRN) has biased composition (basic residues). Composition is skewed to basic and acidic residues over residues 559-572 (KGRE…KNEM) and 580-593 (DLGR…KEAR). Ser568 is modified (phosphoserine). Low complexity predominate over residues 637–646 (SFESSERSSS). A compositionally biased stretch (acidic residues) spans 661–675 (EETESEIESEDEMEN). Basic and acidic residues predominate over residues 676–698 (ESERSMASSEERRIRKMKEEEMK). Residues 743–756 (SSLTTTMTNLSSSS) are compositionally biased toward low complexity. Thr765 is subject to Phosphothreonine. A phosphoserine mark is found at Ser768 and Ser774. The disordered stretch occupies residues 812 to 985 (INPHKSDDDK…ALSKTLGLNK (174 aa)). Basic and acidic residues-rich tracts occupy residues 815-828 (HKSD…RPRN) and 854-863 (DEEKAIEGPS). The span at 887–920 (LDLEDEPSSEEDLGDSYNMDDSEDYDDNAYESET) shows a compositional bias: acidic residues. The segment covering 970–979 (SAAVKSALSK) has biased composition (low complexity).

Belongs to the fungal Na(+)/H(+) exchanger family.

The protein resides in the cell membrane. In terms of biological role, sodium export from cell, takes up external protons in exchange for internal sodium ions. Also capable of exporting potassium ions. The sequence is that of Na(+)/H(+) antiporter (NHA1) from Saccharomyces cerevisiae (strain ATCC 204508 / S288c) (Baker's yeast).